The sequence spans 71 residues: uncharacterized protein (71 aa).

The helical transmembrane segment at 2 to 24 (IIAIVAVVIFLLNFLTPYGYMPM) threads the bilayer. The interval 48-71 (PAESSSNGGSMITKPSTGACQGGR) is disordered. Residues 49–71 (AESSSNGGSMITKPSTGACQGGR) show a composition bias toward polar residues.

It localises to the membrane. This is an uncharacterized protein from Archaeoglobus fulgidus (strain ATCC 49558 / DSM 4304 / JCM 9628 / NBRC 100126 / VC-16).